Reading from the N-terminus, the 235-residue chain is Large ribosomal subunit protein uL1 (235 aa).

This sequence belongs to the universal ribosomal protein uL1 family. As to quaternary structure, part of the 50S ribosomal subunit.

In terms of biological role, binds directly to 23S rRNA. The L1 stalk is quite mobile in the ribosome, and is involved in E site tRNA release. Functionally, protein L1 is also a translational repressor protein, it controls the translation of the L11 operon by binding to its mRNA. This is Large ribosomal subunit protein uL1 from Thermobifida fusca (strain YX).